The sequence spans 1343 residues: DNA-directed RNA polymerase subunit beta (1343 aa).

It belongs to the RNA polymerase beta chain family. In terms of assembly, the RNAP catalytic core consists of 2 alpha, 1 beta, 1 beta' and 1 omega subunit. When a sigma factor is associated with the core the holoenzyme is formed, which can initiate transcription.

It catalyses the reaction RNA(n) + a ribonucleoside 5'-triphosphate = RNA(n+1) + diphosphate. In terms of biological role, DNA-dependent RNA polymerase catalyzes the transcription of DNA into RNA using the four ribonucleoside triphosphates as substrates. This is DNA-directed RNA polymerase subunit beta from Shewanella baltica (strain OS223).